Here is a 90-residue protein sequence, read N- to C-terminus: RNA-binding protein Hfq (90 aa).

The region spanning 9–68 is the Sm domain; that stretch reads DPFLNALRRERVPVSIYLVNGIKLQGQVESFDQFVILLKNTVSQMVYKHAISTVVPARPF.

Belongs to the Hfq family. In terms of assembly, homohexamer.

RNA chaperone that binds small regulatory RNA (sRNAs) and mRNAs to facilitate mRNA translational regulation in response to envelope stress, environmental stress and changes in metabolite concentrations. Also binds with high specificity to tRNAs. In Shewanella oneidensis (strain ATCC 700550 / JCM 31522 / CIP 106686 / LMG 19005 / NCIMB 14063 / MR-1), this protein is RNA-binding protein Hfq.